The chain runs to 323 residues: Ankyrin repeat and SOCS box protein 11 (323 aa).

7 ANK repeats span residues 64–93, 97–126, 130–159, 162–191, 195–224, 227–256, and 260–289; these read ADRS…NVNL, NRVS…HVNA, HGAT…KAQL, YLAS…NIEQ, QLGT…SVDH, WLDT…NLNL, and QGKS…ALSQ. The SOCS box domain occupies 273–323; that stretch reads SVRQALLLHEGPPALSQLCRLCVRKCLGRTCHHAIYALGLPESLEKFLLYQ.

It belongs to the ankyrin SOCS box (ASB) family. As to quaternary structure, substrate-recognition component of the ECS(ASB11) complex, composed of ASB11, CUL5, ELOB, ELOC and RNF7/RBX2.

The protein resides in the endoplasmic reticulum. It participates in protein modification; protein ubiquitination. Substrate-recognition component of a cullin-5-RING E3 ubiquitin-protein ligase complex (ECS complex, also named CRL5 complex), which mediates the ubiquitination and subsequent proteasomal degradation of target proteins, such as BIK, DIRAS2 and RPN1. The ECS(ASB11) complex acts as a regulator of the endoplasmic reticulum unfolded protein response by mediating ubiquitination and degradation of BIK. This is Ankyrin repeat and SOCS box protein 11 (Asb11) from Mus musculus (Mouse).